The primary structure comprises 134 residues: Phosphoribosyl-ATP pyrophosphatase (134 aa).

It belongs to the PRA-PH family.

It localises to the cytoplasm. It carries out the reaction 1-(5-phospho-beta-D-ribosyl)-ATP + H2O = 1-(5-phospho-beta-D-ribosyl)-5'-AMP + diphosphate + H(+). It functions in the pathway amino-acid biosynthesis; L-histidine biosynthesis; L-histidine from 5-phospho-alpha-D-ribose 1-diphosphate: step 2/9. In Verminephrobacter eiseniae (strain EF01-2), this protein is Phosphoribosyl-ATP pyrophosphatase.